We begin with the raw amino-acid sequence, 628 residues long: UvrABC system protein C (628 aa).

Positions T21–V100 constitute a GIY-YIG domain. Residues A214 to Y249 form the UVR domain.

This sequence belongs to the UvrC family. Interacts with UvrB in an incision complex.

Its subcellular location is the cytoplasm. Functionally, the UvrABC repair system catalyzes the recognition and processing of DNA lesions. UvrC both incises the 5' and 3' sides of the lesion. The N-terminal half is responsible for the 3' incision and the C-terminal half is responsible for the 5' incision. This chain is UvrABC system protein C, found in Chlorobium luteolum (strain DSM 273 / BCRC 81028 / 2530) (Pelodictyon luteolum).